A 279-amino-acid chain; its full sequence is Tryptophan synthase alpha chain (279 aa).

Residues glutamate 50 and aspartate 61 each act as proton acceptor in the active site.

It belongs to the TrpA family. In terms of assembly, tetramer of two alpha and two beta chains.

The enzyme catalyses (1S,2R)-1-C-(indol-3-yl)glycerol 3-phosphate + L-serine = D-glyceraldehyde 3-phosphate + L-tryptophan + H2O. It participates in amino-acid biosynthesis; L-tryptophan biosynthesis; L-tryptophan from chorismate: step 5/5. Its function is as follows. The alpha subunit is responsible for the aldol cleavage of indoleglycerol phosphate to indole and glyceraldehyde 3-phosphate. This is Tryptophan synthase alpha chain from Sinorhizobium fredii (strain NBRC 101917 / NGR234).